The sequence spans 360 residues: Phenylalanine--tRNA ligase alpha subunit (360 aa).

Glutamate 260 contacts Mg(2+).

Belongs to the class-II aminoacyl-tRNA synthetase family. Phe-tRNA synthetase alpha subunit type 1 subfamily. Tetramer of two alpha and two beta subunits. Mg(2+) serves as cofactor.

It is found in the cytoplasm. The enzyme catalyses tRNA(Phe) + L-phenylalanine + ATP = L-phenylalanyl-tRNA(Phe) + AMP + diphosphate + H(+). The sequence is that of Phenylalanine--tRNA ligase alpha subunit from Rhizobium rhizogenes (strain K84 / ATCC BAA-868) (Agrobacterium radiobacter).